A 286-amino-acid chain; its full sequence is Probable endonuclease 4 (286 aa).

Zn(2+)-binding residues include histidine 72, histidine 112, glutamate 147, aspartate 181, histidine 184, histidine 215, aspartate 228, histidine 230, and glutamate 260.

It belongs to the AP endonuclease 2 family. It depends on Zn(2+) as a cofactor.

The catalysed reaction is Endonucleolytic cleavage to 5'-phosphooligonucleotide end-products.. Its function is as follows. Endonuclease IV plays a role in DNA repair. It cleaves phosphodiester bonds at apurinic or apyrimidinic (AP) sites, generating a 3'-hydroxyl group and a 5'-terminal sugar phosphate. In Mycoplasma pneumoniae (strain ATCC 29342 / M129 / Subtype 1) (Mycoplasmoides pneumoniae), this protein is Probable endonuclease 4.